The primary structure comprises 237 residues: Ras-related protein Rab-23 (237 aa).

GTP contacts are provided by V20, G21, K22, S23, S24, Y38, and T41. S23 serves as a coordination point for Mg(2+). Positions 28–46 (RYCKGIFTKDYKKTIGVDF) match the Switch 1 motif. The Mg(2+) site is built by T41 and D64. A Switch 2 motif is present at residues 65 to 84 (TAGQEEFDAITKAYYRGAQA). Residues G67, N121, K122, D124, S151, V152, and K153 each contribute to the GTP site. S186 and S187 each carry phosphoserine. Over residues 188–208 (SNKIGVFNTSGGSHSGQNSGT) the composition is skewed to polar residues. The tract at residues 188-237 (SNKIGVFNTSGGSHSGQNSGTLNGGDVINLRPNKQRTKKNRNPFSSCSIP) is disordered. Residue C234 is modified to Cysteine methyl ester. C234 is lipidated: S-geranylgeranyl cysteine. The propeptide at 235–237 (SIP) is removed in mature form.

This sequence belongs to the small GTPase superfamily. Rab family. In terms of assembly, interacts with SUFU. It depends on Mg(2+) as a cofactor.

It localises to the cell membrane. The protein localises to the cytoplasm. The protein resides in the cytoplasmic vesicle. Its subcellular location is the autophagosome. It is found in the endosome membrane. It localises to the phagosome. The protein localises to the phagosome membrane. It catalyses the reaction GTP + H2O = GDP + phosphate + H(+). Its activity is regulated as follows. Regulated by guanine nucleotide exchange factors (GEFs) which promote the exchange of bound GDP for free GTP. Regulated by GTPase activating proteins (GAPs) which increase the GTP hydrolysis activity. Inhibited by GDP dissociation inhibitors (GDIs). In terms of biological role, the small GTPases Rab are key regulators of intracellular membrane trafficking, from the formation of transport vesicles to their fusion with membranes. Rabs cycle between an inactive GDP-bound form and an active GTP-bound form that is able to recruit to membranes different set of downstream effectors directly responsible for vesicle formation, movement, tethering and fusion. Together with SUFU, prevents nuclear import of GLI1, and thereby inhibits GLI1 transcription factor activity. Regulates GLI1 in differentiating chondrocytes. Likewise, regulates GLI3 proteolytic processing and modulates GLI2 and GLI3 transcription factor activity. Plays a role in autophagic vacuole assembly, and mediates defense against pathogens, such as S.aureus, by promoting their capture by autophagosomes that then merge with lysosomes. The protein is Ras-related protein Rab-23 of Homo sapiens (Human).